The following is a 459-amino-acid chain: Protein maelstrom (459 aa).

The segment at residues A2–N69 is a DNA-binding region (HMG box). Residues N43–Q78 are disordered. A compositionally biased stretch (basic and acidic residues) spans A63–Q78.

It belongs to the maelstrom family. In terms of tissue distribution, in germaria and egg chambers, it is detected in the germline. In the germarium, it is in all regions, including region I where the germ cells are dividing. In early egg chambers, it is uniformly distributed throughout the nurse cells and oocyte but, by stage 5, it is most concentrated around the outer margins of the cells, closest to the periphery of the egg chamber. Level decreases in stages 5 and 6, but most noticeably in the oocyte, where protein level remains. No detectable protein from stage 8 onward (at protein level).

The protein localises to the cytoplasm. The protein resides in the nucleus. It localises to the perinuclear region. Its subcellular location is the cytoplasmic ribonucleoprotein granule. Functionally, involved both in the piRNA and miRNA metabolic processes. As a component of the meiotic nuage, plays a central role during oogenesis by repressing transposable elements and preventing their mobilization, which is essential for the germline integrity. Repression of transposable elements is mediated via the piRNA metabolic process, which mediates the repression of transposable elements during meiosis by forming complexes composed of piRNAs and Piwi proteins and governs the repression of transposons. As a nuclear component, it is required for proper differentiation in the germline stem cell (GSC) lineage by repressing microRNA-7 (miR-7), thereby acting as an indirect regulator of bag-of-marbles (Bam). Acts by binding to the promoter of miR-7 gene and repressing its expression; miR-7 repression alleviates the Bam repression by miR-7, thereby allowing differentiation in the germline stem cell (GSC) lineage. Indirectly required to position the microtubule organizing center in stage 2-6 oocytes. Involved in repression of long interspersed nuclear elements (LINEs) including HeT-A, I-element, TART and possibly mst40 LINEs; may have a role in production of piwi-interacting RNA (piRNA). The chain is Protein maelstrom from Drosophila melanogaster (Fruit fly).